A 143-amino-acid polypeptide reads, in one-letter code: Large ribosomal subunit protein uL11 (143 aa).

It belongs to the universal ribosomal protein uL11 family. As to quaternary structure, part of the ribosomal stalk of the 50S ribosomal subunit. Interacts with L10 and the large rRNA to form the base of the stalk. L10 forms an elongated spine to which L12 dimers bind in a sequential fashion forming a multimeric L10(L12)X complex. Post-translationally, one or more lysine residues are methylated.

Its function is as follows. Forms part of the ribosomal stalk which helps the ribosome interact with GTP-bound translation factors. In Dechloromonas aromatica (strain RCB), this protein is Large ribosomal subunit protein uL11.